The following is a 478-amino-acid chain: Proline--tRNA ligase (478 aa).

This sequence belongs to the class-II aminoacyl-tRNA synthetase family. ProS type 3 subfamily. As to quaternary structure, homodimer.

It is found in the cytoplasm. It carries out the reaction tRNA(Pro) + L-proline + ATP = L-prolyl-tRNA(Pro) + AMP + diphosphate. Functionally, catalyzes the attachment of proline to tRNA(Pro) in a two-step reaction: proline is first activated by ATP to form Pro-AMP and then transferred to the acceptor end of tRNA(Pro). This is Proline--tRNA ligase from Methanoregula boonei (strain DSM 21154 / JCM 14090 / 6A8).